Here is a 66-residue protein sequence, read N- to C-terminus: MLKKFKDLTLEDMKARRLALRKEYMDLRFKAVVGHVENPLKKRELRRDIARLNTIIHEYAIGIRKV.

This sequence belongs to the universal ribosomal protein uL29 family.

The chain is Large ribosomal subunit protein uL29 from Borrelia hermsii (strain HS1 / DAH).